The sequence spans 87 residues: MKENTHPNYREVVFQDMSSDFSFVTRSTIQTKESIVWKDGKEYPLAKIEVSSESHPFYTGTQKIMDTAGRVEKFRQKFGSKAGKAAK.

Belongs to the bacterial ribosomal protein bL31 family. Type B subfamily. In terms of assembly, part of the 50S ribosomal subunit.

This Ralstonia nicotianae (strain ATCC BAA-1114 / GMI1000) (Ralstonia solanacearum) protein is Large ribosomal subunit protein bL31B.